A 518-amino-acid chain; its full sequence is Sensor protein kinase HptS (518 aa).

The next 2 membrane-spanning stretches (helical) occupy residues 20–40 (IFPV…IYIW) and 222–242 (GITL…FGFI). The Histidine kinase domain maps to 297 to 513 (EQLIHSIEHT…LICYKIPLSR (217 aa)). A Phosphohistidine; by autocatalysis modification is found at His-325.

Post-translationally, autophosphorylated.

It localises to the cell membrane. It carries out the reaction ATP + protein L-histidine = ADP + protein N-phospho-L-histidine.. Its function is as follows. Member of the two-component regulatory system HptS/HptR that regulates genes involved in hexose phosphate transport system in response to changes in extracellular phosphate sources. May act as a sensor protein kinase which is autophosphorylated at a histidine residue and transfers its phosphate group to the conserved aspartic acid residue in the regulatory domain of HptS. In turn, HptS antagonizes CcpA-dependent transcription of a subset of CcpA-regulated genes involved in antibiotic susceptibility. In Staphylococcus aureus (strain MSSA476), this protein is Sensor protein kinase HptS (hptS).